The chain runs to 64 residues: Prokaryotic ubiquitin-like protein Pup (64 aa).

Residues 1–37 (MAQEQTKRGGGGGDDEDVTGTTAAGQERREKLAQDTD) form a disordered region. The interval 21 to 58 (TTAAGQERREKLAQDTDDLLDEIDDVLEENAEDFVRAY) is ARC ATPase binding. Residues 25-52 (GQERREKLAQDTDDLLDEIDDVLEENAE) adopt a coiled-coil conformation. Position 64 is a deamidated glutamine (Q64). Residue Q64 forms an Isoglutamyl lysine isopeptide (Gln-Lys) (interchain with K-? in acceptor proteins) linkage.

The protein belongs to the prokaryotic ubiquitin-like protein family. In terms of assembly, strongly interacts with the proteasome-associated ATPase ARC through a hydrophobic interface; the interacting region of Pup lies in its C-terminal half. There is one Pup binding site per ARC hexamer ring. In terms of processing, is modified by deamidation of its C-terminal glutamine to glutamate by the deamidase Dop, a prerequisite to the subsequent pupylation process.

Its pathway is protein degradation; proteasomal Pup-dependent pathway. Functionally, protein modifier that is covalently attached to lysine residues of substrate proteins, thereby targeting them for proteasomal degradation. The tagging system is termed pupylation. The polypeptide is Prokaryotic ubiquitin-like protein Pup (Mycobacterium marinum (strain ATCC BAA-535 / M)).